The primary structure comprises 92 residues: Small ribosomal subunit protein uS19 (92 aa).

The protein belongs to the universal ribosomal protein uS19 family.

Protein S19 forms a complex with S13 that binds strongly to the 16S ribosomal RNA. In Bartonella quintana (strain Toulouse) (Rochalimaea quintana), this protein is Small ribosomal subunit protein uS19.